A 933-amino-acid polypeptide reads, in one-letter code: MNMKKKEKHAIRKKSIGVASVLVGTLIGFGLLSSKEADASENSVTQSDSASNESKSNDSSSVSAAPKTDDTNVSDTKTSSNTNNGETSVAQNPAQQETTQSSSTNATTEETPVTGEATTTTTNQANTPATTQSSNTNAEELVNQTSNETTFNDTNTVSSVNSPQNSTNAENVSTTQDTSTEATPSNNESAPQSTDASNKDVVNQAVNTSAPRMRAFSLAAVAADAPAAGTDITNQLTNVTVGIDSGTTVYPHQAGYVKLNYGFSVPNSAVKGDTFKITVPKELNLNGVTSTAKVPPIMAGDQVLANGVIDSDGNVIYTFTDYVNTKDDVKATLTMPAYIDPENVKKTGNVTLATGIGSTTANKTVLVDYEKYGKFYNLSIKGTIDQIDKTNNTYRQTIYVNPSGDNVIAPVLTGNLKPNTDSNALIDQQNTSIKVYKVDNAADLSESYFVNPENFEDVTNSVNITFPNPNQYKVEFNTPDDQITTPYIVVVNGHIDPNSKGDLALRSTLYGYNSNIIWRSMSWDNEVAFNNGSGSGDGIDKPVVPEQPDEPGEIEPIPEDSDSDPGSDSGSDSNSDSGSDSGSDSTSDSGSDSASDSDSASDSDSASDSDSASDSDSASDSDSDNDSDSDSDSDSDSDSDSDSDSDSDSDSDSDSDSDSDSDSDSDSDSDSDSDSDSDSDSDSDSDSDSDSDSDSDSDSDSDSDSDSDSDSDSDSDSDSDSDSDSDSDSDSDSDSDSDSDSDSDSDSDSDSDSDSDSDSDSDSDSDSASDSDSDSDSDSDSDSDSDSDSDSDSDSDSDSDSDSDSDSESDSDSESDSDSDSDSDSDSDSDSDSDSDSASDSDSGSDSDSSSDSDSESDSNSDSESGSNNNVVPPNSPKNGTNASNKNEAKDSKEPLPDTGSEDEANTSLIWGLLASIGSLLLFRRKKENKDKK.

Positions 1–39 are cleaved as a signal peptide; the sequence is MNMKKKEKHAIRKKSIGVASVLVGTLIGFGLLSSKEADA. The short motif at 9-20 is the YSIRK-G/S signaling motif element; that stretch reads HAIRKKSIGVAS. 2 disordered regions span residues 34–200 and 529–904; these read SKEA…SNKD and FNNG…SEDE. The tract at residues 40–542 is ligand binding A region; that stretch reads SENSVTQSDS…SGSGDGIDKP (503 aa). A compositionally biased stretch (low complexity) spans 47–65; that stretch reads SDSASNESKSNDSSSVSAA. Residues 71 to 105 show a composition bias toward polar residues; the sequence is TNVSDTKTSSNTNNGETSVAQNPAQQETTQSSSTN. Over residues 106 to 132 the composition is skewed to low complexity; sequence ATTEETPVTGEATTTTTNQANTPATTQ. Over residues 133-200 the composition is skewed to polar residues; it reads SSNTNAEELV…PQSTDASNKD (68 aa). The span at 547–565 shows a compositional bias: acidic residues; it reads QPDEPGEIEPIPEDSDSDP. A compositionally biased stretch (low complexity) spans 566–598; sequence GSDSGSDSNSDSGSDSGSDSTSDSGSDSASDSD. Residues 599–861 are compositionally biased toward acidic residues; the sequence is SASDSDSASD…DSDSESDSNS (263 aa). Low complexity predominate over residues 862-880; that stretch reads DSESGSNNNVVPPNSPKNG. Positions 887–896 are enriched in basic and acidic residues; that stretch reads NEAKDSKEPL. The LPXTG sorting signal motif lies at 896-900; it reads LPDTG. Pentaglycyl murein peptidoglycan amidated threonine is present on Thr-899. Residues 900-933 constitute a propeptide, removed by sortase; sequence GSEDEANTSLIWGLLASIGSLLLFRRKKENKDKK.

The protein belongs to the serine-aspartate repeat-containing protein (SDr) family.

The protein resides in the secreted. It is found in the cell wall. In terms of biological role, cell surface-associated protein implicated in virulence. Promotes bacterial attachment exclusively to the gamma-chain of human fibrinogen. Induces formation of bacterial clumps, which diminish the ability of group IIA phospholipase A2 to cause bacterial phospholipid hydrolysis and killing. Significantly decreases macrophage phagocytosis possibly thanks to the clumps, clumped bacteria being too large to be phagocytosed. Dominant factor responsible for human platelet aggregation, which may be an important mechanism for initiating infective endocarditis. Enhances spleen cell proliferative response in vitro, contributing significantly to the immunostimulatory activity of S.aureus. The polypeptide is Clumping factor A (clfA) (Staphylococcus aureus (strain Newman)).